The following is a 90-amino-acid chain: Acylphosphatase (90 aa).

In terms of domain architecture, Acylphosphatase-like spans cysteine 5 to lysine 90. Residues arginine 20 and asparagine 38 contribute to the active site.

This sequence belongs to the acylphosphatase family.

The enzyme catalyses an acyl phosphate + H2O = a carboxylate + phosphate + H(+). This is Acylphosphatase (acyP) from Photobacterium profundum (strain SS9).